The primary structure comprises 571 residues: DNA primase (571 aa).

A CHC2-type zinc finger spans residues 20 to 44; the sequence is CPFHKEKTPSFQVDTEKGYYHCFGC. Residues 229–309 enclose the Toprim domain; sequence AELVVVEGYM…KFRVRATSVP (81 aa). Mg(2+) is bound by residues glutamate 235, aspartate 280, and aspartate 282.

Belongs to the DnaG primase family. As to quaternary structure, monomer. Interacts with DnaB. It depends on Zn(2+) as a cofactor. Mg(2+) serves as cofactor.

The catalysed reaction is ssDNA + n NTP = ssDNA/pppN(pN)n-1 hybrid + (n-1) diphosphate.. Functionally, RNA polymerase that catalyzes the synthesis of short RNA molecules used as primers for DNA polymerase during DNA replication. This is DNA primase from Deinococcus radiodurans (strain ATCC 13939 / DSM 20539 / JCM 16871 / CCUG 27074 / LMG 4051 / NBRC 15346 / NCIMB 9279 / VKM B-1422 / R1).